Reading from the N-terminus, the 542-residue chain is CTP synthase (542 aa).

Residues 1–265 (MARYIFITGG…DDEVLAAFGL (265 aa)) form an amidoligase domain region. Residue Ser13 participates in CTP binding. A UTP-binding site is contributed by Ser13. Residue 14 to 19 (SLGKGL) participates in ATP binding. L-glutamine is bound at residue Tyr54. Asp71 provides a ligand contact to ATP. Mg(2+)-binding residues include Asp71 and Glu139. CTP-binding positions include 146–148 (DIE), 186–191 (KTKPTQ), and Lys222. UTP is bound by residues 186 to 191 (KTKPTQ) and Lys222. Residue 238–240 (RDA) coordinates ATP. The 252-residue stretch at 290–541 (TIAIVGKYTG…IQAAVVQSRL (252 aa)) folds into the Glutamine amidotransferase type-1 domain. Residue Gly352 coordinates L-glutamine. Cys379 functions as the Nucleophile; for glutamine hydrolysis in the catalytic mechanism. L-glutamine-binding positions include 380 to 383 (FGMQ), Glu403, and Arg469. Residues His514 and Glu516 contribute to the active site.

It belongs to the CTP synthase family. In terms of assembly, homotetramer.

It carries out the reaction UTP + L-glutamine + ATP + H2O = CTP + L-glutamate + ADP + phosphate + 2 H(+). It catalyses the reaction L-glutamine + H2O = L-glutamate + NH4(+). The enzyme catalyses UTP + NH4(+) + ATP = CTP + ADP + phosphate + 2 H(+). It functions in the pathway pyrimidine metabolism; CTP biosynthesis via de novo pathway; CTP from UDP: step 2/2. With respect to regulation, allosterically activated by GTP, when glutamine is the substrate; GTP has no effect on the reaction when ammonia is the substrate. The allosteric effector GTP functions by stabilizing the protein conformation that binds the tetrahedral intermediate(s) formed during glutamine hydrolysis. Inhibited by the product CTP, via allosteric rather than competitive inhibition. In terms of biological role, catalyzes the ATP-dependent amination of UTP to CTP with either L-glutamine or ammonia as the source of nitrogen. Regulates intracellular CTP levels through interactions with the four ribonucleotide triphosphates. The chain is CTP synthase from Nitrobacter hamburgensis (strain DSM 10229 / NCIMB 13809 / X14).